A 649-amino-acid polypeptide reads, in one-letter code: FAS-associated factor 1 (649 aa).

The UBA domain occupies 1–57 (MASNMDREMILADFQACTGIENIDEAITLLEQNNWDLVAAINGVIPQENGILQSDFG). A disordered region spans residues 55–84 (DFGGETMPGPTFDPASPPAPAPAPSSSAFR). Serine 319 is subject to Phosphoserine. The region spanning 568 to 645 (NAEPVSKLRI…NLFPQETLFL (78 aa)) is the UBX domain. The residue at position 579 (threonine 579) is a Phosphothreonine. Position 581 is a phosphoserine (serine 581).

As to quaternary structure, interacts with CDT1 and ATPase VCP/p97. Interacts (via UBA domain) with FAS (via death domain). Interacts (via UBA domain) with NLRP12 (via DAPIN/PYRIN domain). As to expression, central nervous system.

It localises to the nucleus. Its function is as follows. Ubiquitin-binding protein. Required for the progression of DNA replication forks by targeting DNA replication licensing factor CDT1 for degradation. Potentiates but cannot initiate FAS-induced apoptosis. This chain is FAS-associated factor 1 (Faf1), found in Rattus norvegicus (Rat).